The sequence spans 421 residues: 3-phosphoshikimate 1-carboxyvinyltransferase (421 aa).

Residues Lys-19, Ser-20, and Arg-24 each contribute to the 3-phosphoshikimate site. Lys-19 lines the phosphoenolpyruvate pocket. 2 residues coordinate phosphoenolpyruvate: Gly-88 and Arg-116. 3-phosphoshikimate is bound by residues Ser-160, Gln-162, Asp-307, and Lys-334. Gln-162 provides a ligand contact to phosphoenolpyruvate. Asp-307 serves as the catalytic Proton acceptor. Positions 338 and 380 each coordinate phosphoenolpyruvate.

It belongs to the EPSP synthase family. In terms of assembly, monomer.

It localises to the cytoplasm. The catalysed reaction is 3-phosphoshikimate + phosphoenolpyruvate = 5-O-(1-carboxyvinyl)-3-phosphoshikimate + phosphate. It functions in the pathway metabolic intermediate biosynthesis; chorismate biosynthesis; chorismate from D-erythrose 4-phosphate and phosphoenolpyruvate: step 6/7. Functionally, catalyzes the transfer of the enolpyruvyl moiety of phosphoenolpyruvate (PEP) to the 5-hydroxyl of shikimate-3-phosphate (S3P) to produce enolpyruvyl shikimate-3-phosphate and inorganic phosphate. In Thermotoga neapolitana (strain ATCC 49049 / DSM 4359 / NBRC 107923 / NS-E), this protein is 3-phosphoshikimate 1-carboxyvinyltransferase.